The sequence spans 261 residues: Anamorsin homolog (261 aa).

The tract at residues 4 to 134 is N-terminal SAM-like domain; sequence VQENNQVLYI…EIGSAAKLSL (131 aa). Residues 134–173 form a linker region; that stretch reads LGGGANKAKVAAVWKLDVDDDGEAEERIDEDELLDEEDKV. Residues cysteine 183, cysteine 192, cysteine 195, and cysteine 197 each coordinate [2Fe-2S] cluster. Residues 183 to 197 form a fe-S binding site A region; sequence CGTTGKRKACKDCSC. Residues cysteine 222, cysteine 225, cysteine 233, and cysteine 236 each coordinate [4Fe-4S] cluster. 2 short sequence motifs (cx2C motif) span residues 222–225 and 233–236; these read CGSC and CATC. The tract at residues 222–236 is fe-S binding site B; the sequence is CGSCYLGDAFRCATC.

It belongs to the anamorsin family. Monomer. Requires [2Fe-2S] cluster as cofactor. The cofactor is [4Fe-4S] cluster.

It localises to the cytoplasm. The protein localises to the mitochondrion intermembrane space. In terms of biological role, component of the cytosolic iron-sulfur (Fe-S) protein assembly (CIA) machinery. Required for the maturation of extramitochondrial Fe-S proteins. Part of an electron transfer chain functioning in an early step of cytosolic Fe-S biogenesis, facilitating the de novo assembly of a [4Fe-4S] cluster on the cytosolic Fe-S scaffold complex. Electrons are transferred from NADPH via a FAD- and FMN-containing diflavin oxidoreductase. Together with the diflavin oxidoreductase, also required for the assembly of the diferric tyrosyl radical cofactor of ribonucleotide reductase (RNR), probably by providing electrons for reduction during radical cofactor maturation in the catalytic small subunit. The sequence is that of Anamorsin homolog from Culex quinquefasciatus (Southern house mosquito).